Here is a 285-residue protein sequence, read N- to C-terminus: Ribosomal RNA small subunit methyltransferase A (285 aa).

N30, L32, G57, E78, D101, and N121 together coordinate S-adenosyl-L-methionine.

It belongs to the class I-like SAM-binding methyltransferase superfamily. rRNA adenine N(6)-methyltransferase family. RsmA subfamily.

The protein localises to the cytoplasm. The catalysed reaction is adenosine(1518)/adenosine(1519) in 16S rRNA + 4 S-adenosyl-L-methionine = N(6)-dimethyladenosine(1518)/N(6)-dimethyladenosine(1519) in 16S rRNA + 4 S-adenosyl-L-homocysteine + 4 H(+). Its function is as follows. Specifically dimethylates two adjacent adenosines (A1518 and A1519) in the loop of a conserved hairpin near the 3'-end of 16S rRNA in the 30S particle. May play a critical role in biogenesis of 30S subunits. In Treponema pallidum (strain Nichols), this protein is Ribosomal RNA small subunit methyltransferase A.